Consider the following 160-residue polypeptide: Large ribosomal subunit protein eL29 (160 aa).

The segment covering 1 to 26 (MAKSKNHTTHNQSRKWHRNGIKKPRS) has biased composition (basic residues). 2 disordered regions span residues 1 to 34 (MAKS…SLKG) and 115 to 160 (RLCQ…VKAP). K5 bears the N6-methyllysine mark. S31 is subject to Phosphoserine. The residue at position 33 (K33) is an N6-acetyllysine. Residues 126-160 (KAGAKAPAKAQASAPAQAPKGAQAPKGAQAPVKAP) are compositionally biased toward low complexity. A run of 2 repeats spans residues 127 to 134 (AGAKAPAK) and 135 to 142 (AQASAPAQ). Residues 127-142 (AGAKAPAKAQASAPAQ) form a 2 X 8 AA tandem repeats of A-X-A-K-A-P-A-[KQ] region. At S138 the chain carries Phosphoserine. An N6-acetyllysine modification is found at K145.

It belongs to the eukaryotic ribosomal protein eL29 family. In terms of assembly, component of the large ribosomal subunit.

The protein resides in the cytoplasm. Its function is as follows. Component of the large ribosomal subunit. The ribosome is a large ribonucleoprotein complex responsible for the synthesis of proteins in the cell. The polypeptide is Large ribosomal subunit protein eL29 (Rpl29) (Mus musculus (Mouse)).